The primary structure comprises 538 residues: Bifunctional purine biosynthesis protein PurH (538 aa).

In terms of domain architecture, MGS-like spans 8–158; that stretch reads IPAPDKVEIK…KNHAYVTILT (151 aa).

This sequence belongs to the PurH family.

The enzyme catalyses (6R)-10-formyltetrahydrofolate + 5-amino-1-(5-phospho-beta-D-ribosyl)imidazole-4-carboxamide = 5-formamido-1-(5-phospho-D-ribosyl)imidazole-4-carboxamide + (6S)-5,6,7,8-tetrahydrofolate. The catalysed reaction is IMP + H2O = 5-formamido-1-(5-phospho-D-ribosyl)imidazole-4-carboxamide. Its pathway is purine metabolism; IMP biosynthesis via de novo pathway; 5-formamido-1-(5-phospho-D-ribosyl)imidazole-4-carboxamide from 5-amino-1-(5-phospho-D-ribosyl)imidazole-4-carboxamide (10-formyl THF route): step 1/1. It participates in purine metabolism; IMP biosynthesis via de novo pathway; IMP from 5-formamido-1-(5-phospho-D-ribosyl)imidazole-4-carboxamide: step 1/1. This Rhizobium etli (strain ATCC 51251 / DSM 11541 / JCM 21823 / NBRC 15573 / CFN 42) protein is Bifunctional purine biosynthesis protein PurH.